Here is a 204-residue protein sequence, read N- to C-terminus: Isochorismatase domain-containing protein 2 (204 aa).

It belongs to the isochorismatase family. In terms of assembly, interacts with CDKN2A.

It is found in the cytoplasm. The protein resides in the nucleus. This Bos taurus (Bovine) protein is Isochorismatase domain-containing protein 2 (ISOC2).